The chain runs to 764 residues: Myotubularin-related protein 10-B (764 aa).

The Myotubularin phosphatase domain occupies 208–649 (FESYSDWDRE…THIQIWKLCY (442 aa)).

Belongs to the protein-tyrosine phosphatase family. Non-receptor class myotubularin subfamily.

The chain is Myotubularin-related protein 10-B (mtmr10-b) from Xenopus laevis (African clawed frog).